The chain runs to 37 residues: Large ribosomal subunit protein bL36c (37 aa).

It belongs to the bacterial ribosomal protein bL36 family.

Its subcellular location is the plastid. It localises to the chloroplast. This chain is Large ribosomal subunit protein bL36c, found in Populus alba (White poplar).